The sequence spans 134 residues: Large ribosomal subunit protein eL32 (134 aa).

Belongs to the eukaryotic ribosomal protein eL32 family.

This Drosophila affinis (Fruit fly) protein is Large ribosomal subunit protein eL32 (RpL32).